The sequence spans 1134 residues: DENN domain-containing protein 2B (1134 aa).

The segment covering 1-13 has biased composition (polar residues); sequence MTMTANKNSSITH. The tract at residues 1-90 is disordered; the sequence is MTMTANKNSS…DPSPETSPPI (90 aa). Phosphoserine occurs at positions 30 and 32. Positions 32–43 are enriched in pro residues; the sequence is SPPPVLYPPRSP. Thr-228 carries the post-translational modification Phosphothreonine. Ser-230 bears the Phosphoserine mark. Disordered regions lie at residues 233–273 and 289–571; these read SYPE…GIRK and LKEQ…KRHS. A compositionally biased stretch (basic and acidic residues) spans 249 to 259; that stretch reads SLYRLEKRPGR. Residues 315-348 are compositionally biased toward low complexity; the sequence is GTLGTLEEPTGTASVSPSSRAGGVAGVAGEAGPP. A Phosphothreonine modification is found at Thr-361. Position 365 is a phosphoserine (Ser-365). Pro residues predominate over residues 370 to 385; that stretch reads LLPPKSSPDPAVNPVP. The segment covering 389–399 has biased composition (basic and acidic residues); the sequence is RTFEYEADKNP. Pro residues predominate over residues 406-428; the sequence is GLPPSPTPAAPPPLPSTPAPPVT. Basic residues predominate over residues 429 to 443; sequence RRPKKDMRGHRKSQN. Positions 453–478 are enriched in polar residues; that stretch reads SSLQSLYPSSPTENGTESQPKFGSKS. Thr-479 is modified (phosphothreonine). Polar residues-rich tracts occupy residues 511–521 and 542–555; these read KSQQLSENSLD and SLKSNSQSLRSGNW. Residue Ser-542 is modified to Phosphoserine. Basic residues predominate over residues 559–570; it reads KSHRLPRLPKRH. A phosphoserine mark is found at Ser-571 and Ser-619. Positions 633 to 658 are disordered; the sequence is LSMSSLETASLRDENSESESDSDDRF. The region spanning 695 to 843 is the uDENN domain; that stretch reads EYFVVVSLKK…PFPAPGKTIK (149 aa). The cDENN domain occupies 865 to 998; it reads RLEHVDFECL…LQAALEQALE (134 aa). A dDENN domain is found at 1000 to 1093; the sequence is KSELISQDSD…QDRELRKCRA (94 aa).

As to quaternary structure, interacts with ITSN1 and GRB2. Isoform 1 interacts with the SH3 domain of ABL1. In terms of processing, phosphorylated. Phosphorylation decreases ITSN1 binding.

The protein resides in the cytoplasm. It is found in the cell cortex. The protein localises to the cell membrane. It localises to the recycling endosome. May be involved in cytoskeletal organization and tumorogenicity. Seems to be involved in a signaling transduction pathway leading to activation of MAPK1/ERK2. Plays a role in EGFR trafficking from recycling endosomes back to the cell membrane. In terms of biological role, guanine nucleotide exchange factor (GEF) which may activate RAB9A and RAB9B. Promotes the exchange of GDP to GTP, converting inactive GDP-bound Rab proteins into their active GTP-bound form. Functionally, may block ERK2 activation stimulated by ABL1. May alter cell morphology and cell growth. The sequence is that of DENN domain-containing protein 2B (Dennd2b) from Mus musculus (Mouse).